A 152-amino-acid chain; its full sequence is D-aminoacyl-tRNA deacylase (152 aa).

Positions 142–143 (GP) match the Gly-cisPro motif, important for rejection of L-amino acids motif.

Belongs to the DTD family. As to quaternary structure, homodimer.

The protein localises to the cytoplasm. It carries out the reaction glycyl-tRNA(Ala) + H2O = tRNA(Ala) + glycine + H(+). The enzyme catalyses a D-aminoacyl-tRNA + H2O = a tRNA + a D-alpha-amino acid + H(+). Its function is as follows. An aminoacyl-tRNA editing enzyme that deacylates mischarged D-aminoacyl-tRNAs. Also deacylates mischarged glycyl-tRNA(Ala), protecting cells against glycine mischarging by AlaRS. Acts via tRNA-based rather than protein-based catalysis; rejects L-amino acids rather than detecting D-amino acids in the active site. By recycling D-aminoacyl-tRNA to D-amino acids and free tRNA molecules, this enzyme counteracts the toxicity associated with the formation of D-aminoacyl-tRNA entities in vivo and helps enforce protein L-homochirality. This Burkholderia lata (strain ATCC 17760 / DSM 23089 / LMG 22485 / NCIMB 9086 / R18194 / 383) protein is D-aminoacyl-tRNA deacylase.